Consider the following 290-residue polypeptide: Acetyl-coenzyme A carboxylase carboxyl transferase subunit beta (290 aa).

One can recognise a CoA carboxyltransferase N-terminal domain in the interval 28 to 290; that stretch reads VMTKCPQCKK…GGGESGWWRN (263 aa). Zn(2+)-binding residues include C32, C35, C51, and C54. The C4-type zinc-finger motif lies at 32 to 54; it reads CPQCKKIMYTKELVKNLRVCLSC.

It belongs to the AccD/PCCB family. As to quaternary structure, acetyl-CoA carboxylase is a heterohexamer composed of biotin carboxyl carrier protein (AccB), biotin carboxylase (AccC) and two subunits each of ACCase subunit alpha (AccA) and ACCase subunit beta (AccD). Zn(2+) serves as cofactor.

The protein resides in the cytoplasm. The catalysed reaction is N(6)-carboxybiotinyl-L-lysyl-[protein] + acetyl-CoA = N(6)-biotinyl-L-lysyl-[protein] + malonyl-CoA. It functions in the pathway lipid metabolism; malonyl-CoA biosynthesis; malonyl-CoA from acetyl-CoA: step 1/1. Functionally, component of the acetyl coenzyme A carboxylase (ACC) complex. Biotin carboxylase (BC) catalyzes the carboxylation of biotin on its carrier protein (BCCP) and then the CO(2) group is transferred by the transcarboxylase to acetyl-CoA to form malonyl-CoA. This chain is Acetyl-coenzyme A carboxylase carboxyl transferase subunit beta, found in Geobacillus thermodenitrificans (strain NG80-2).